A 783-amino-acid polypeptide reads, in one-letter code: Protein DWD HYPERSENSITIVE TO UV-B 1 (783 aa).

2 WD repeats span residues 145 to 198 (GEFT…LKLP) and 212 to 256 (SDSS…DPSL). Positions 382-389 (RKKESVVR) match the Nuclear localization signal motif. WD repeat units lie at residues 439–480 (DNSR…IFRY), 485–525 (GSQS…STVT), 538–577 (DEFD…RLQV), 581–621 (MHQE…SRPC), 625–664 (SSTK…LHLN), and 666–710 (EIVP…RRLR).

As to quaternary structure, interacts directly with DDB1A. Binds to COP1 and RUP1.

It localises to the nucleus. Functionally, may act as a substrate receptor of a CUL4-RING E3 ubiquitin-protein ligase (CRL4) complex involved in the negative regulation of cellular responses to ultraviolet-B (UV-B) illumination, likely in coordination with RUP1. Interacts with COP1 and probably prevents the formation of active UVR8-COP1 complex, thus avoiding UVR8-COP1-mediated positive regulation of UV-B responses. In Arabidopsis thaliana (Mouse-ear cress), this protein is Protein DWD HYPERSENSITIVE TO UV-B 1.